Consider the following 185-residue polypeptide: Ribulose bisphosphate carboxylase small subunit, chloroplastic 2 (185 aa).

The N-terminal 45 residues, 1 to 45 (MAAVIAKSSVSAAVARPARSSVRPMAALKPAVKAAPVAAPAQANQ), are a transit peptide targeting the chloroplast. M46 is modified (N-methylmethionine).

It belongs to the RuBisCO small chain family. As to quaternary structure, heterohexadecamer of 8 large and 8 small subunits.

It localises to the plastid. It is found in the chloroplast. The protein localises to the chloroplast stroma. In terms of biological role, ruBisCO catalyzes two reactions: the carboxylation of D-ribulose 1,5-bisphosphate, the primary event in carbon dioxide fixation, as well as the oxidative fragmentation of the pentose substrate. Both reactions occur simultaneously and in competition at the same active site. Although the small subunit is not catalytic it is essential for maximal activity. The polypeptide is Ribulose bisphosphate carboxylase small subunit, chloroplastic 2 (Chlamydomonas reinhardtii (Chlamydomonas smithii)).